Here is a 432-residue protein sequence, read N- to C-terminus: Enolase (432 aa).

Residue glutamine 163 coordinates (2R)-2-phosphoglycerate. Glutamate 205 acts as the Proton donor in catalysis. Residues aspartate 242, glutamate 289, and aspartate 316 each coordinate Mg(2+). 4 residues coordinate (2R)-2-phosphoglycerate: lysine 341, arginine 370, serine 371, and lysine 392. The Proton acceptor role is filled by lysine 341.

This sequence belongs to the enolase family. It depends on Mg(2+) as a cofactor. Post-translationally, probably phosphorylated.

It is found in the cytoplasm. Its subcellular location is the secreted. It localises to the cell surface. The catalysed reaction is (2R)-2-phosphoglycerate = phosphoenolpyruvate + H2O. Its pathway is carbohydrate degradation; glycolysis; pyruvate from D-glyceraldehyde 3-phosphate: step 4/5. In terms of biological role, catalyzes the reversible conversion of 2-phosphoglycerate (2-PG) into phosphoenolpyruvate (PEP). It is essential for the degradation of carbohydrates via glycolysis. Functionally, 'Moonlights' as a plasminogen receptor. Binds plasminogen and human salivary mucin MG2 when expressed on the bacterial cell surface, potentially allowing the bacterium to acquire surface-associated proteolytic activity that may help the dissemination through oral tissues and entrance into the blood stream. The polypeptide is Enolase (Streptococcus mutans serotype c (strain ATCC 700610 / UA159)).